The following is a 499-amino-acid chain: Circadian clock oscillator protein KaiC (499 aa).

KaiC domains follow at residues 1 to 243 (MQSS…VSVF) and 257 to 499 (VRIS…DERA). Residues G45, T46, G47, K48, T49, S85, K220, L221, R222, T224, H226, T286, G287, T288, G289, K290, T291, and L292 each coordinate ATP. T49 provides a ligand contact to Mg(2+). Mg(2+) is bound at residue T291. A Mg(2+)-binding site is contributed by E314. W327 contacts ATP. At S427 the chain carries Phosphoserine; by autocatalysis. Phosphothreonine; by autocatalysis is present on T428. Residues R447, K453, M454, R455, S457, H459, and K461 each contribute to the ATP site.

The protein belongs to the KaiC family. Homohexamer; hexamerization is dependent on ATP-binding. Component of the KaiBC complex. KaiC interacts with SasA, activating its autokinase function and leading to RpaA activation. Mg(2+) is required as a cofactor. Phosphorylated on serine and threonine residues by autocatalysis. Has a 4 step phosphorylation cycle; the autokinase acts first on Thr-428, then Ser-427. When Ser-427 is modified KaiC switches to an autophosphatase mode, acting first on phospho-Thr-428 then phospho-Ser-427.

The enzyme catalyses L-seryl-[protein] + ATP = O-phospho-L-seryl-[protein] + ADP + H(+). The catalysed reaction is L-threonyl-[protein] + ATP = O-phospho-L-threonyl-[protein] + ADP + H(+). It catalyses the reaction ATP + H2O = ADP + phosphate + H(+). Functionally, central component of the KaiBC oscillator complex, which constitutes the main circadian regulator in cyanobacteria. Its composition changes during the circadian cycle to control KaiC phosphorylation. Autophosphorylates and has a weak ATPase activity; ATPase activity defines the circadian period. The sequence is that of Circadian clock oscillator protein KaiC from Prochlorococcus marinus (strain MIT 9313).